The primary structure comprises 125 residues: Interferon-induced transmembrane protein 1 (125 aa).

At methionine 1–histidine 36 the chain is on the cytoplasmic side. The residue at position 16 (serine 16) is a Phosphoserine. Residues valine 37 to phenylalanine 57 constitute an intramembrane region (helical). S-palmitoyl cysteine attachment occurs at residues cysteine 50, cysteine 51, and cysteine 84. The Cytoplasmic segment spans residues alanine 58–asparagine 86. An interaction with CAV1 region spans residues cysteine 84–tyrosine 125. The helical transmembrane segment at isoleucine 87–glycine 107 threads the bilayer. Residues serine 108 to tyrosine 125 are Extracellular-facing.

It belongs to the CD225/Dispanin family. In terms of assembly, interacts with CD81. Part of a complex composed of CD19, CR2/CD21, CD81 and IFITM1/CD225 in the membrane of mature B-cells. Interacts with CAV1; this interaction enhances the ability of CAV1 in inhibiting ERK activation. Palmitoylation on membrane-proximal cysteines controls clustering in membrane compartments and antiviral activity. In terms of tissue distribution, bone (at protein level). Levels greatly elevated in colon cancer, cervical cancer, esophageal cancer and ovarian cancer. Expressed in glioma cell lines.

It is found in the cell membrane. It localises to the lysosome membrane. IFN-induced antiviral protein which inhibits the entry of viruses to the host cell cytoplasm, permitting endocytosis, but preventing subsequent viral fusion and release of viral contents into the cytosol. Active against multiple viruses, including influenza A virus, SARS coronaviruses (SARS-CoV and SARS-CoV-2), Marburg virus (MARV), Ebola virus (EBOV), Dengue virus (DNV), West Nile virus (WNV), human immunodeficiency virus type 1 (HIV-1) and hepatitis C virus (HCV). Can inhibit: influenza virus hemagglutinin protein-mediated viral entry, MARV and EBOV GP1,2-mediated viral entry and SARS-CoV and SARS-CoV-2 S protein-mediated viral entry. Also implicated in cell adhesion and control of cell growth and migration. Inhibits SARS-CoV-2 S protein-mediated syncytia formation. Plays a key role in the antiproliferative action of IFN-gamma either by inhibiting the ERK activation or by arresting cell growth in G1 phase in a p53-dependent manner. Acts as a positive regulator of osteoblast differentiation. In hepatocytes, IFITM proteins act in a coordinated manner to restrict HCV infection by targeting the endocytosed HCV virion for lysosomal degradation. IFITM2 and IFITM3 display anti-HCV activity that may complement the anti-HCV activity of IFITM1 by inhibiting the late stages of HCV entry, possibly in a coordinated manner by trapping the virion in the endosomal pathway and targeting it for degradation at the lysosome. The sequence is that of Interferon-induced transmembrane protein 1 from Homo sapiens (Human).